A 250-amino-acid chain; its full sequence is MFRATCNTRDFKKVINATSNLVDEICFEVDENGIKASAMDPSHVALVSMEMPKDVFEEYEGDIQDIGIDLEALKKIIARGRGDEKLILDLDTEKNKLNVTFKSNVTRKFSIALYDVSSSNLKVPDIEYPNSVSIKAGAFVEALKDAELVNDHITLKIDEDKFIIYSKGDLNQSETVFDNSIEDDDNALAEFNMGEASRSTFNLAYLKDLTKSTAAEDLLKIYLGSDMPVKIEYEVSGSKLVFLLAPRIES.

This sequence belongs to the PCNA family. In terms of assembly, homotrimer. The subunits circularize to form a toroid; DNA passes through its center. Replication factor C (RFC) is required to load the toroid on the DNA.

Sliding clamp subunit that acts as a moving platform for DNA processing. Responsible for tethering the catalytic subunit of DNA polymerase and other proteins to DNA during high-speed replication. The chain is DNA polymerase sliding clamp from Methanococcus maripaludis (strain C7 / ATCC BAA-1331).